Reading from the N-terminus, the 461-residue chain is Bifunctional protein GlmU (461 aa).

Residues 1–243 (MNATVPSAAP…EDELRGINSR (243 aa)) form a pyrophosphorylase region. Residues 24–27 (LAAG), Lys-38, Gln-86, 91–92 (GT), 112–114 (YGD), Gly-155, Glu-169, Asn-184, and Asn-241 each bind UDP-N-acetyl-alpha-D-glucosamine. Asp-114 is a binding site for Mg(2+). Asn-241 contributes to the Mg(2+) binding site. A linker region spans residues 244 to 264 (AELAEAEACVQRRLRAAALDG). Positions 265-461 (GATLVAPETV…AALRRKKEQG (197 aa)) are N-acetyltransferase. Arg-330 and Lys-348 together coordinate UDP-N-acetyl-alpha-D-glucosamine. Residue His-360 is the Proton acceptor of the active site. UDP-N-acetyl-alpha-D-glucosamine is bound by residues Tyr-363 and Asn-374. Acetyl-CoA-binding positions include Ala-377, 383-384 (NY), Ser-402, Ala-420, and Arg-437.

It in the N-terminal section; belongs to the N-acetylglucosamine-1-phosphate uridyltransferase family. This sequence in the C-terminal section; belongs to the transferase hexapeptide repeat family. In terms of assembly, homotrimer. Mg(2+) is required as a cofactor.

The protein localises to the cytoplasm. It carries out the reaction alpha-D-glucosamine 1-phosphate + acetyl-CoA = N-acetyl-alpha-D-glucosamine 1-phosphate + CoA + H(+). The catalysed reaction is N-acetyl-alpha-D-glucosamine 1-phosphate + UTP + H(+) = UDP-N-acetyl-alpha-D-glucosamine + diphosphate. Its pathway is nucleotide-sugar biosynthesis; UDP-N-acetyl-alpha-D-glucosamine biosynthesis; N-acetyl-alpha-D-glucosamine 1-phosphate from alpha-D-glucosamine 6-phosphate (route II): step 2/2. It functions in the pathway nucleotide-sugar biosynthesis; UDP-N-acetyl-alpha-D-glucosamine biosynthesis; UDP-N-acetyl-alpha-D-glucosamine from N-acetyl-alpha-D-glucosamine 1-phosphate: step 1/1. It participates in bacterial outer membrane biogenesis; LPS lipid A biosynthesis. In terms of biological role, catalyzes the last two sequential reactions in the de novo biosynthetic pathway for UDP-N-acetylglucosamine (UDP-GlcNAc). The C-terminal domain catalyzes the transfer of acetyl group from acetyl coenzyme A to glucosamine-1-phosphate (GlcN-1-P) to produce N-acetylglucosamine-1-phosphate (GlcNAc-1-P), which is converted into UDP-GlcNAc by the transfer of uridine 5-monophosphate (from uridine 5-triphosphate), a reaction catalyzed by the N-terminal domain. This is Bifunctional protein GlmU from Gluconacetobacter diazotrophicus (strain ATCC 49037 / DSM 5601 / CCUG 37298 / CIP 103539 / LMG 7603 / PAl5).